We begin with the raw amino-acid sequence, 349 residues long: ATP phosphoribosyltransferase regulatory subunit (349 aa).

The segment at 327-349 is disordered; the sequence is GRGRGVRPRRASARGGRARARPR. Residues 330–349 are compositionally biased toward basic residues; that stretch reads RGVRPRRASARGGRARARPR.

It belongs to the class-II aminoacyl-tRNA synthetase family. HisZ subfamily. In terms of assembly, heteromultimer composed of HisG and HisZ subunits.

The protein resides in the cytoplasm. The protein operates within amino-acid biosynthesis; L-histidine biosynthesis; L-histidine from 5-phospho-alpha-D-ribose 1-diphosphate: step 1/9. Required for the first step of histidine biosynthesis. May allow the feedback regulation of ATP phosphoribosyltransferase activity by histidine. This is ATP phosphoribosyltransferase regulatory subunit from Anaeromyxobacter dehalogenans (strain 2CP-1 / ATCC BAA-258).